Here is a 715-residue protein sequence, read N- to C-terminus: Fatty acid oxidation complex subunit alpha (715 aa).

Residues 1–190 form an enoyl-CoA hydratase/isomerase region; sequence MIYEGKAITV…KVSAVDAVVT (190 aa). A substrate-binding site is contributed by aspartate 297. The segment at 312–715 is 3-hydroxyacyl-CoA dehydrogenase; the sequence is KDVKQAAVLG…MAKNGQSFFG (404 aa). Residues methionine 325, aspartate 344, 401-403, lysine 408, and serine 430 each bind NAD(+); that span reads VVE. Catalysis depends on histidine 451, which acts as the For 3-hydroxyacyl-CoA dehydrogenase activity. Asparagine 454 lines the NAD(+) pocket. Asparagine 501 and tyrosine 660 together coordinate substrate.

This sequence in the N-terminal section; belongs to the enoyl-CoA hydratase/isomerase family. It in the C-terminal section; belongs to the 3-hydroxyacyl-CoA dehydrogenase family. As to quaternary structure, heterotetramer of two alpha chains (FadB) and two beta chains (FadA).

The enzyme catalyses a (3S)-3-hydroxyacyl-CoA + NAD(+) = a 3-oxoacyl-CoA + NADH + H(+). It carries out the reaction a (3S)-3-hydroxyacyl-CoA = a (2E)-enoyl-CoA + H2O. It catalyses the reaction a 4-saturated-(3S)-3-hydroxyacyl-CoA = a (3E)-enoyl-CoA + H2O. The catalysed reaction is (3S)-3-hydroxybutanoyl-CoA = (3R)-3-hydroxybutanoyl-CoA. The enzyme catalyses a (3Z)-enoyl-CoA = a 4-saturated (2E)-enoyl-CoA. It carries out the reaction a (3E)-enoyl-CoA = a 4-saturated (2E)-enoyl-CoA. It participates in lipid metabolism; fatty acid beta-oxidation. In terms of biological role, involved in the aerobic and anaerobic degradation of long-chain fatty acids via beta-oxidation cycle. Catalyzes the formation of 3-oxoacyl-CoA from enoyl-CoA via L-3-hydroxyacyl-CoA. It can also use D-3-hydroxyacyl-CoA and cis-3-enoyl-CoA as substrate. In Pseudomonas fragi, this protein is Fatty acid oxidation complex subunit alpha.